The chain runs to 83 residues: MCNALCECLKCPGKVVCCCCSCACKMLLSIVFSALLMVVVIGLIVYFTVFYHKDKNTDEVQKQVAQLTPIVKRSIRDYFNKEY.

Endoderm-specific pattern of expression during embryogenesis; anterior and posterior midgut primordia.

Functionally, involved in morphogenesis and development. This Drosophila melanogaster (Fruit fly) protein is Protein midgut expression 1 (mex1).